Consider the following 278-residue polypeptide: 2-dehydro-3-deoxyphosphooctonate aldolase (278 aa).

This sequence belongs to the KdsA family.

It is found in the cytoplasm. The enzyme catalyses D-arabinose 5-phosphate + phosphoenolpyruvate + H2O = 3-deoxy-alpha-D-manno-2-octulosonate-8-phosphate + phosphate. Its pathway is carbohydrate biosynthesis; 3-deoxy-D-manno-octulosonate biosynthesis; 3-deoxy-D-manno-octulosonate from D-ribulose 5-phosphate: step 2/3. It participates in bacterial outer membrane biogenesis; lipopolysaccharide biosynthesis. This chain is 2-dehydro-3-deoxyphosphooctonate aldolase, found in Dechloromonas aromatica (strain RCB).